The primary structure comprises 328 residues: Malate dehydrogenase (328 aa).

11 to 17 (GAAGQIG) is a binding site for NAD(+). Substrate-binding residues include Arg94 and Arg100. NAD(+) contacts are provided by residues Asn107, Gln114, and 131 to 133 (VGN). Substrate-binding residues include Asn133 and Arg164. The active-site Proton acceptor is His189.

This sequence belongs to the LDH/MDH superfamily. MDH type 2 family.

The enzyme catalyses (S)-malate + NAD(+) = oxaloacetate + NADH + H(+). Functionally, catalyzes the reversible oxidation of malate to oxaloacetate. The protein is Malate dehydrogenase of Acinetobacter baylyi (strain ATCC 33305 / BD413 / ADP1).